A 32-amino-acid polypeptide reads, in one-letter code: Phallacidin proprotein (32 aa).

Positions 1–10 (MSDINATRLP) are excised as a propeptide. Positions 11 to 17 (AWLVDCP) form a cross-link, cyclopeptide (Ala-Pro). The 2'-cysteinyl-6'-hydroxytryptophan sulfoxide (Trp-Cys) cross-link spans 12–16 (WLVDC). Positions 18 to 32 (CVGDDINRLLTRGEK) are excised as a propeptide.

It belongs to the MSDIN fungal toxin family. In terms of processing, processed by the macrocyclase-peptidase enzyme POPB to yield a toxic cyclic heptapeptide. POPB first removes 10 residues from the N-terminus. Conformational trapping of the remaining peptide forces the enzyme to release this intermediate rather than proceed to macrocyclization. The enzyme rebinds the remaining peptide in a different conformation and catalyzes macrocyclization of the N-terminal 7 residues.

Its function is as follows. Major toxin that belongs to the bicyclic heptapeptides called phallotoxins. Although structurally related to amatoxins, phallotoxins have a different mode of action, which is the stabilization of F-actin. Phallotoxins are poisonous when administered parenterally, but not orally because of poor absorption. This is Phallacidin proprotein from Amanita pallidorosea.